Consider the following 101-residue polypeptide: Protein Tat (101 aa).

The tract at residues 1–24 (MEPVDPRLEPWKHPGSQPKTACTN) is interaction with human CREBBP. Residues 1–48 (MEPVDPRLEPWKHPGSQPKTACTNCYCKKCCFHCQVCFITKGLGISYG) are transactivation. Zn(2+) contacts are provided by Cys-22, Cys-25, and Cys-27. The segment at 22–37 (CTNCYCKKCCFHCQVC) is cysteine-rich. Lys-28 carries the post-translational modification N6-acetyllysine; by host PCAF. Residues Cys-30, His-33, Cys-34, and Cys-37 each coordinate Zn(2+). Residues 38 to 48 (FITKGLGISYG) form a core region. The span at 48–57 (GRKKRRQRRR) shows a compositional bias: basic residues. The tract at residues 48–101 (GRKKRRQRRRAPPDSEVHQVSLPKQPASQPQGDPTGPKESKKKVERETETDPVH) is disordered. Residues 49-57 (RKKRRQRRR) carry the Nuclear localization signal, RNA-binding (TAR), and protein transduction motif. The interval 49-86 (RKKRRQRRRAPPDSEVHQVSLPKQPASQPQGDPTGPKE) is interaction with the host capping enzyme RNGTT. An N6-acetyllysine; by host EP300 and GCN5L2 mark is found at Lys-50 and Lys-51. 2 positions are modified to asymmetric dimethylarginine; by host PRMT6: Arg-52 and Arg-53. Residue Lys-71 forms a Glycyl lysine isopeptide (Lys-Gly) (interchain with G-Cter in ubiquitin) linkage. The segment covering 83–101 (GPKESKKKVERETETDPVH) has biased composition (basic and acidic residues).

The protein belongs to the lentiviruses Tat family. Interacts with host CCNT1. Associates with the P-TEFb complex composed at least of Tat, P-TEFb (CDK9 and CCNT1), TAR RNA, RNA Pol II. Recruits the HATs CREBBP, TAF1/TFIID, EP300, PCAF and GCN5L2. Interacts with host KAT5/Tip60; this interaction targets the latter to degradation. Interacts with the host deacetylase SIRT1. Interacts with host capping enzyme RNGTT; this interaction stimulates RNGTT. Binds to host KDR, and to the host integrins ITGAV/ITGB3 and ITGA5/ITGB1. Interacts with host KPNB1/importin beta-1 without previous binding to KPNA1/importin alpha-1. Interacts with EIF2AK2. Interacts with host nucleosome assembly protein NAP1L1; this interaction may be required for the transport of Tat within the nucleus, since the two proteins interact at the nuclear rim. Interacts with host C1QBP/SF2P32; this interaction involves lysine-acetylated Tat. Interacts with the host chemokine receptors CCR2, CCR3 and CXCR4. Interacts with host DPP4/CD26; this interaction may trigger an anti-proliferative effect. Interacts with host LDLR. Interacts with the host extracellular matrix metalloproteinase MMP1. Interacts with host PRMT6; this interaction mediates Tat's methylation. Interacts with, and is ubiquitinated by MDM2/Hdm2. Interacts with host PSMC3 and HTATIP2. Interacts with STAB1; this interaction may overcome SATB1-mediated repression of IL2 and IL2RA (interleukin) in T cells by binding to the same domain than HDAC1. Interacts (when acetylated) with human CDK13, thereby increasing HIV-1 mRNA splicing and promoting the production of the doubly spliced HIV-1 protein Nef. Interacts with host TBP; this interaction modulates the activity of transcriptional pre-initiation complex. Interacts with host RELA. Interacts with host PLSCR1; this interaction negatively regulates Tat transactivation activity by altering its subcellular distribution. Post-translationally, asymmetrical arginine methylation by host PRMT6 seems to diminish the transactivation capacity of Tat and affects the interaction with host CCNT1. Acetylation by EP300, CREBBP, GCN5L2/GCN5 and PCAF regulates the transactivation activity of Tat. EP300-mediated acetylation of Lys-50 promotes dissociation of Tat from the TAR RNA through the competitive binding to PCAF's bromodomain. In addition, the non-acetylated Tat's N-terminus can also interact with PCAF. PCAF-mediated acetylation of Lys-28 enhances Tat's binding to CCNT1. Lys-50 is deacetylated by SIRT1. In terms of processing, polyubiquitination by host MDM2 does not target Tat to degradation, but activates its transactivation function and fosters interaction with CCNT1 and TAR RNA. Post-translationally, phosphorylated by EIF2AK2 on serine and threonine residues adjacent to the basic region important for TAR RNA binding and function. Phosphorylation of Tat by EIF2AK2 is dependent on the prior activation of EIF2AK2 by dsRNA.

The protein localises to the host nucleus. It localises to the host nucleolus. Its subcellular location is the host cytoplasm. The protein resides in the secreted. Its function is as follows. Transcriptional activator that increases RNA Pol II processivity, thereby increasing the level of full-length viral transcripts. Recognizes a hairpin structure at the 5'-LTR of the nascent viral mRNAs referred to as the transactivation responsive RNA element (TAR) and recruits the cyclin T1-CDK9 complex (P-TEFb complex) that will in turn hyperphosphorylate the RNA polymerase II to allow efficient elongation. The CDK9 component of P-TEFb and other Tat-activated kinases hyperphosphorylate the C-terminus of RNA Pol II that becomes stabilized and much more processive. Other factors such as HTATSF1/Tat-SF1, SUPT5H/SPT5, and HTATIP2 are also important for Tat's function. Besides its effect on RNA Pol II processivity, Tat induces chromatin remodeling of proviral genes by recruiting the histone acetyltransferases (HATs) CREBBP, EP300 and PCAF to the chromatin. This also contributes to the increase in proviral transcription rate, especially when the provirus integrates in transcriptionally silent region of the host genome. To ensure maximal activation of the LTR, Tat mediates nuclear translocation of NF-kappa-B by interacting with host RELA. Through its interaction with host TBP, Tat may also modulate transcription initiation. Tat can reactivate a latently infected cell by penetrating in it and transactivating its LTR promoter. In the cytoplasm, Tat is thought to act as a translational activator of HIV-1 mRNAs. Functionally, extracellular circulating Tat can be endocytosed by surrounding uninfected cells via the binding to several surface receptors such as CD26, CXCR4, heparan sulfate proteoglycans (HSPG) or LDLR. Neurons are rarely infected, but they internalize Tat via their LDLR. Through its interaction with nuclear HATs, Tat is potentially able to control the acetylation-dependent cellular gene expression. Modulates the expression of many cellular genes involved in cell survival, proliferation or in coding for cytokines or cytokine receptors. Tat plays a role in T-cell and neurons apoptosis. Tat induced neurotoxicity and apoptosis probably contribute to neuroAIDS. Circulating Tat also acts as a chemokine-like and/or growth factor-like molecule that binds to specific receptors on the surface of the cells, affecting many cellular pathways. In the vascular system, Tat binds to ITGAV/ITGB3 and ITGA5/ITGB1 integrins dimers at the surface of endothelial cells and competes with bFGF for heparin-binding sites, leading to an excess of soluble bFGF. The protein is Protein Tat of Human immunodeficiency virus type 1 group M subtype B (isolate SF162) (HIV-1).